A 292-amino-acid polypeptide reads, in one-letter code: Elongation factor Ts (292 aa).

An involved in Mg(2+) ion dislocation from EF-Tu region spans residues 79-82; it reads TDFV.

This sequence belongs to the EF-Ts family.

Its subcellular location is the cytoplasm. Associates with the EF-Tu.GDP complex and induces the exchange of GDP to GTP. It remains bound to the aminoacyl-tRNA.EF-Tu.GTP complex up to the GTP hydrolysis stage on the ribosome. This chain is Elongation factor Ts, found in Xanthomonas oryzae pv. oryzae (strain MAFF 311018).